We begin with the raw amino-acid sequence, 340 residues long: NADH-quinone oxidoreductase subunit H (340 aa).

Helical transmembrane passes span 4–24 (TIGI…PLLL), 78–98 (YLFV…WAVI), 113–133 (VLYL…AGWA), 151–171 (VSYE…AGSM), 184–204 (MLHW…IAGI), 244–264 (SMIL…LSPF), 273–293 (IFFV…FLFV), and 316–336 (VLIP…VAHV).

Belongs to the complex I subunit 1 family. As to quaternary structure, NDH-1 is composed of 14 different subunits. Subunits NuoA, H, J, K, L, M, N constitute the membrane sector of the complex.

It is found in the cell inner membrane. It catalyses the reaction a quinone + NADH + 5 H(+)(in) = a quinol + NAD(+) + 4 H(+)(out). Functionally, NDH-1 shuttles electrons from NADH, via FMN and iron-sulfur (Fe-S) centers, to quinones in the respiratory chain. The immediate electron acceptor for the enzyme in this species is believed to be ubiquinone. Couples the redox reaction to proton translocation (for every two electrons transferred, four hydrogen ions are translocated across the cytoplasmic membrane), and thus conserves the redox energy in a proton gradient. This subunit may bind ubiquinone. The protein is NADH-quinone oxidoreductase subunit H of Legionella pneumophila (strain Paris).